The sequence spans 75 residues: UPF0270 protein PSPTO_1630 (75 aa).

Belongs to the UPF0270 family.

The sequence is that of UPF0270 protein PSPTO_1630 from Pseudomonas syringae pv. tomato (strain ATCC BAA-871 / DC3000).